Reading from the N-terminus, the 80-residue chain is Large ribosomal subunit protein uL24 (80 aa).

The tract at residues 53–80 is disordered; it reads HMRPTQGQTQGSIIEREFPIHSSNVKKS.

It belongs to the universal ribosomal protein uL24 family. Part of the 50S ribosomal subunit.

One of two assembly initiator proteins, it binds directly to the 5'-end of the 23S rRNA, where it nucleates assembly of the 50S subunit. Functionally, one of the proteins that surrounds the polypeptide exit tunnel on the outside of the subunit. The sequence is that of Large ribosomal subunit protein uL24 from Pelodictyon phaeoclathratiforme (strain DSM 5477 / BU-1).